Here is a 222-residue protein sequence, read N- to C-terminus: 2-C-methyl-D-erythritol 4-phosphate cytidylyltransferase (222 aa).

Belongs to the IspD/TarI cytidylyltransferase family. IspD subfamily.

It carries out the reaction 2-C-methyl-D-erythritol 4-phosphate + CTP + H(+) = 4-CDP-2-C-methyl-D-erythritol + diphosphate. It functions in the pathway isoprenoid biosynthesis; isopentenyl diphosphate biosynthesis via DXP pathway; isopentenyl diphosphate from 1-deoxy-D-xylulose 5-phosphate: step 2/6. In terms of biological role, catalyzes the formation of 4-diphosphocytidyl-2-C-methyl-D-erythritol from CTP and 2-C-methyl-D-erythritol 4-phosphate (MEP). This is 2-C-methyl-D-erythritol 4-phosphate cytidylyltransferase from Porphyromonas gingivalis (strain ATCC BAA-308 / W83).